The primary structure comprises 139 residues: Large-conductance mechanosensitive channel (139 aa).

2 helical membrane-spanning segments follow: residues 14–34 (VVDM…VKSL) and 86–106 (GLFI…FLLI).

Belongs to the MscL family. In terms of assembly, homopentamer.

Its subcellular location is the cell inner membrane. Functionally, channel that opens in response to stretch forces in the membrane lipid bilayer. May participate in the regulation of osmotic pressure changes within the cell. This Methylobacillus flagellatus (strain ATCC 51484 / DSM 6875 / VKM B-1610 / KT) protein is Large-conductance mechanosensitive channel.